Here is a 484-residue protein sequence, read N- to C-terminus: MEAEEAQHGASPPISAIEEFSIIPEAPMRSSQVSALGLEAQEDEDPSYKWREEHRLSATQQSELRDVCDYAIETMPSFPKEGSADVEPNQESLVAEACDTPEHWEAVPQSLAGRQARTLAPPELWACPIQSEHLDMAPFSSDLGSEEEEVEFWPGLTSLTLGSGQAEEEEETSSDNSGQTRYYSPCEEHPAETNQNEGAESGTIRQGEELPSEELQESQGLLHPQEVQVLEEQGQQEAGFRGEGTLREDVCADGLLGEEQMIEQVNDEKGEQKQKQEQVQDVMLGRQGERMGLTGEPEGLNDGEWEQEDMERKAQGQGGPEQGEERKRELQVPEENRADSQDEKSQTFLGKSEEVTGKQEDHGIKEKGVPVSGQEAKEPESWDGGRLGAVGRARSREEENEHHGPSMPALIAPEDSPHCDLFPGASYLVTQIPGTQTESRAEELSPAALSPLLEPIRCSHQPISLLGSFLTEESPDKEKLLSVL.

The disordered stretch occupies residues 139–418; sequence FSSDLGSEEE…ALIAPEDSPH (280 aa). A Phosphoserine modification is found at S184. Positions 217 to 237 are enriched in low complexity; sequence ESQGLLHPQEVQVLEEQGQQE. Positions 266–278 are enriched in basic and acidic residues; that stretch reads NDEKGEQKQKQEQ. Acidic residues predominate over residues 299 to 309; that stretch reads GLNDGEWEQED. Basic and acidic residues-rich tracts occupy residues 323 to 368 and 394 to 404; these read GEER…KEKG and RSREEENEHHG.

The chain is Rho guanine nucleotide exchange factor 35 (ARHGEF35) from Homo sapiens (Human).